Consider the following 401-residue polypeptide: 8-amino-7-oxononanoate synthase (401 aa).

R19 is a binding site for substrate. A pyridoxal 5'-phosphate-binding site is contributed by 106-107; sequence GY. H131 provides a ligand contact to substrate. Positions 176, 204, and 233 each coordinate pyridoxal 5'-phosphate. K236 carries the post-translational modification N6-(pyridoxal phosphate)lysine. T350 serves as a coordination point for substrate.

This sequence belongs to the class-II pyridoxal-phosphate-dependent aminotransferase family. BioF subfamily. Homodimer. Pyridoxal 5'-phosphate is required as a cofactor.

It catalyses the reaction 6-carboxyhexanoyl-[ACP] + L-alanine + H(+) = (8S)-8-amino-7-oxononanoate + holo-[ACP] + CO2. Its pathway is cofactor biosynthesis; biotin biosynthesis. Functionally, catalyzes the decarboxylative condensation of pimeloyl-[acyl-carrier protein] and L-alanine to produce 8-amino-7-oxononanoate (AON), [acyl-carrier protein], and carbon dioxide. This Pseudomonas paraeruginosa (strain DSM 24068 / PA7) (Pseudomonas aeruginosa (strain PA7)) protein is 8-amino-7-oxononanoate synthase.